The chain runs to 399 residues: Phosphopentomutase (399 aa).

Positions 10, 296, 301, 337, 338, and 349 each coordinate Mn(2+).

This sequence belongs to the phosphopentomutase family. It depends on Mn(2+) as a cofactor.

It is found in the cytoplasm. The enzyme catalyses 2-deoxy-alpha-D-ribose 1-phosphate = 2-deoxy-D-ribose 5-phosphate. It catalyses the reaction alpha-D-ribose 1-phosphate = D-ribose 5-phosphate. The protein operates within carbohydrate degradation; 2-deoxy-D-ribose 1-phosphate degradation; D-glyceraldehyde 3-phosphate and acetaldehyde from 2-deoxy-alpha-D-ribose 1-phosphate: step 1/2. Functionally, isomerase that catalyzes the conversion of deoxy-ribose 1-phosphate (dRib-1-P) and ribose 1-phosphate (Rib-1-P) to deoxy-ribose 5-phosphate (dRib-5-P) and ribose 5-phosphate (Rib-5-P), respectively. The sequence is that of Phosphopentomutase from Idiomarina loihiensis (strain ATCC BAA-735 / DSM 15497 / L2-TR).